We begin with the raw amino-acid sequence, 359 residues long: Protein RecA (359 aa).

74–81 (GPESSGKT) is a binding site for ATP.

The protein belongs to the RecA family.

Its subcellular location is the cytoplasm. Functionally, can catalyze the hydrolysis of ATP in the presence of single-stranded DNA, the ATP-dependent uptake of single-stranded DNA by duplex DNA, and the ATP-dependent hybridization of homologous single-stranded DNAs. It interacts with LexA causing its activation and leading to its autocatalytic cleavage. In Anaplasma marginale (strain St. Maries), this protein is Protein RecA.